The primary structure comprises 489 residues: Ribulose bisphosphate carboxylase large chain (489 aa).

Substrate-binding residues include N128 and T178. The active-site Proton acceptor is the K180. Residue K182 participates in substrate binding. The Mg(2+) site is built by K206, D208, and E209. K206 bears the N6-carboxylysine mark. H298 acts as the Proton acceptor in catalysis. Residues R299, H331, and S383 each coordinate substrate.

It belongs to the RuBisCO large chain family. Type I subfamily. In terms of assembly, heterohexadecamer of 8 large chains and 8 small chains. Requires Mg(2+) as cofactor.

It catalyses the reaction 2 (2R)-3-phosphoglycerate + 2 H(+) = D-ribulose 1,5-bisphosphate + CO2 + H2O. It carries out the reaction D-ribulose 1,5-bisphosphate + O2 = 2-phosphoglycolate + (2R)-3-phosphoglycerate + 2 H(+). Its function is as follows. RuBisCO catalyzes two reactions: the carboxylation of D-ribulose 1,5-bisphosphate, the primary event in carbon dioxide fixation, as well as the oxidative fragmentation of the pentose substrate. Both reactions occur simultaneously and in competition at the same active site. The sequence is that of Ribulose bisphosphate carboxylase large chain from Nitrosospira multiformis (strain ATCC 25196 / NCIMB 11849 / C 71).